The chain runs to 298 residues: MDLLGPMEMTEGSLCSFTAADDFYDDPCFNTSDMHFFEDLDPRLVHVGGLLKPEEHPHTRAPPREPTEEEHVRAPSGHHQAGRCLLWACKACKRKTTNADRRKAATMRERRRLSKVNEAFETLKRCTSTNPNQRLPKVEILRNAIRYIESLQALLREQEDAYYPVLEHYSGESDASSPRSNCSDGMMEYSGPPCSSRRRNSYDSSYYTESPNDPKHGKSSVVSSLDCLSSIVERISTDNSTCPILPPAEAVAEGSPCSPQEGGNLSDSGAQIPSPTNCTPLPQESSSSSSSNPIYQVL.

Basic and acidic residues predominate over residues 53 to 73; it reads PEEHPHTRAPPREPTEEEHVR. The tract at residues 53-77 is disordered; that stretch reads PEEHPHTRAPPREPTEEEHVRAPSG. The 52-residue stretch at 100–151 folds into the bHLH domain; it reads DRRKAATMRERRRLSKVNEAFETLKRCTSTNPNQRLPKVEILRNAIRYIESL. 2 disordered regions span residues 170-220 and 242-298; these read SGES…GKSS and CPIL…YQVL. Polar residues-rich tracts occupy residues 173–183 and 257–284; these read SDASSPRSNCS and CSPQEGGNLSDSGAQIPSPTNCTPLPQE.

As to quaternary structure, efficient DNA binding requires dimerization with another bHLH protein. Seems to form active heterodimers with ITF-2.

It localises to the nucleus. Its function is as follows. Acts as a transcriptional activator that promotes transcription of muscle-specific target genes and plays a role in muscle differentiation. Induces fibroblasts to differentiate into myoblasts. Interacts with and is inhibited by the twist protein. This interaction probably involves the basic domains of both proteins. This is Myoblast determination protein 1 homolog (MYOD1) from Gallus gallus (Chicken).